The following is a 327-amino-acid chain: Phenylalanine--tRNA ligase alpha subunit (327 aa).

Glu-252 is a binding site for Mg(2+).

The protein belongs to the class-II aminoacyl-tRNA synthetase family. Phe-tRNA synthetase alpha subunit type 1 subfamily. Tetramer of two alpha and two beta subunits. It depends on Mg(2+) as a cofactor.

The protein resides in the cytoplasm. The catalysed reaction is tRNA(Phe) + L-phenylalanine + ATP = L-phenylalanyl-tRNA(Phe) + AMP + diphosphate + H(+). The sequence is that of Phenylalanine--tRNA ligase alpha subunit from Tolumonas auensis (strain DSM 9187 / NBRC 110442 / TA 4).